We begin with the raw amino-acid sequence, 66 residues long: Large ribosomal subunit protein bL35 (66 aa).

It belongs to the bacterial ribosomal protein bL35 family.

The chain is Large ribosomal subunit protein bL35 from Rhodopseudomonas palustris (strain BisB18).